Consider the following 193-residue polypeptide: Large ribosomal subunit protein uL5 (193 aa).

Belongs to the universal ribosomal protein uL5 family. As to quaternary structure, part of the 50S ribosomal subunit; part of the 5S rRNA/L5/L18/L25 subcomplex. Contacts the 5S rRNA and the P site tRNA. Forms a bridge to the 30S subunit in the 70S ribosome.

In terms of biological role, this is one of the proteins that bind and probably mediate the attachment of the 5S RNA into the large ribosomal subunit, where it forms part of the central protuberance. In the 70S ribosome it contacts protein S13 of the 30S subunit (bridge B1b), connecting the 2 subunits; this bridge is implicated in subunit movement. Contacts the P site tRNA; the 5S rRNA and some of its associated proteins might help stabilize positioning of ribosome-bound tRNAs. This is Large ribosomal subunit protein uL5 from Arthrobacter sp. (strain FB24).